Reading from the N-terminus, the 388-residue chain is Chorismate synthase (388 aa).

NADP(+) contacts are provided by Arg39 and Arg45. FMN is bound by residues 130–132 (RSS), 251–252 (NA), Gly296, 311–315 (KPIPT), and Arg337.

It belongs to the chorismate synthase family. Homotetramer. FMNH2 serves as cofactor.

The enzyme catalyses 5-O-(1-carboxyvinyl)-3-phosphoshikimate = chorismate + phosphate. The protein operates within metabolic intermediate biosynthesis; chorismate biosynthesis; chorismate from D-erythrose 4-phosphate and phosphoenolpyruvate: step 7/7. Its function is as follows. Catalyzes the anti-1,4-elimination of the C-3 phosphate and the C-6 proR hydrogen from 5-enolpyruvylshikimate-3-phosphate (EPSP) to yield chorismate, which is the branch point compound that serves as the starting substrate for the three terminal pathways of aromatic amino acid biosynthesis. This reaction introduces a second double bond into the aromatic ring system. The sequence is that of Chorismate synthase from Streptococcus pyogenes serotype M49 (strain NZ131).